Consider the following 338-residue polypeptide: Ketol-acid reductoisomerase (NADP(+)) (338 aa).

The KARI N-terminal Rossmann domain maps to 1–181 (MKVFYDKDCD…GGGRTGIIET (181 aa)). Residues 24-27 (YGSQ), Arg47, Ser50, Thr52, and 82-85 (DEFQ) contribute to the NADP(+) site. Residue His107 is part of the active site. Gly133 is a binding site for NADP(+). One can recognise a KARI C-terminal knotted domain in the interval 182–327 (TFKDETETDL…EQLRSMMPWI (146 aa)). Asp190, Glu194, Glu226, and Glu230 together coordinate Mg(2+). Position 251 (Ser251) interacts with substrate.

The protein belongs to the ketol-acid reductoisomerase family. Mg(2+) is required as a cofactor.

It carries out the reaction (2R)-2,3-dihydroxy-3-methylbutanoate + NADP(+) = (2S)-2-acetolactate + NADPH + H(+). The enzyme catalyses (2R,3R)-2,3-dihydroxy-3-methylpentanoate + NADP(+) = (S)-2-ethyl-2-hydroxy-3-oxobutanoate + NADPH + H(+). It functions in the pathway amino-acid biosynthesis; L-isoleucine biosynthesis; L-isoleucine from 2-oxobutanoate: step 2/4. Its pathway is amino-acid biosynthesis; L-valine biosynthesis; L-valine from pyruvate: step 2/4. Functionally, involved in the biosynthesis of branched-chain amino acids (BCAA). Catalyzes an alkyl-migration followed by a ketol-acid reduction of (S)-2-acetolactate (S2AL) to yield (R)-2,3-dihydroxy-isovalerate. In the isomerase reaction, S2AL is rearranged via a Mg-dependent methyl migration to produce 3-hydroxy-3-methyl-2-ketobutyrate (HMKB). In the reductase reaction, this 2-ketoacid undergoes a metal-dependent reduction by NADPH to yield (R)-2,3-dihydroxy-isovalerate. The sequence is that of Ketol-acid reductoisomerase (NADP(+)) from Pseudomonas putida (strain ATCC 700007 / DSM 6899 / JCM 31910 / BCRC 17059 / LMG 24140 / F1).